Reading from the N-terminus, the 401-residue chain is S-adenosylmethionine synthase (401 aa).

137–142 (GEGSGD) serves as a coordination point for ATP. The segment at 272-305 (GTSAEQGDDGSVGRGNRSNGLITPNRSMSMEATS) is disordered. Residues 287-305 (NRSNGLITPNRSMSMEATS) show a composition bias toward polar residues.

The protein belongs to the AdoMet synthase 2 family. It depends on Mg(2+) as a cofactor.

It catalyses the reaction L-methionine + ATP + H2O = S-adenosyl-L-methionine + phosphate + diphosphate. The protein operates within amino-acid biosynthesis; S-adenosyl-L-methionine biosynthesis; S-adenosyl-L-methionine from L-methionine: step 1/1. In terms of biological role, catalyzes the formation of S-adenosylmethionine from methionine and ATP. This chain is S-adenosylmethionine synthase, found in Natronomonas pharaonis (strain ATCC 35678 / DSM 2160 / CIP 103997 / JCM 8858 / NBRC 14720 / NCIMB 2260 / Gabara) (Halobacterium pharaonis).